We begin with the raw amino-acid sequence, 197 residues long: Fe/S biogenesis protein NfuA (197 aa).

Residues C155 and C158 each coordinate [4Fe-4S] cluster.

It belongs to the NfuA family. In terms of assembly, homodimer. Requires [4Fe-4S] cluster as cofactor.

In terms of biological role, involved in iron-sulfur cluster biogenesis. Binds a 4Fe-4S cluster, can transfer this cluster to apoproteins, and thereby intervenes in the maturation of Fe/S proteins. Could also act as a scaffold/chaperone for damaged Fe/S proteins. This Pseudomonas savastanoi pv. phaseolicola (strain 1448A / Race 6) (Pseudomonas syringae pv. phaseolicola (strain 1448A / Race 6)) protein is Fe/S biogenesis protein NfuA.